A 257-amino-acid polypeptide reads, in one-letter code: GTP cyclohydrolase FolE2 (257 aa).

The protein belongs to the GTP cyclohydrolase IV family.

The enzyme catalyses GTP + H2O = 7,8-dihydroneopterin 3'-triphosphate + formate + H(+). Its pathway is cofactor biosynthesis; 7,8-dihydroneopterin triphosphate biosynthesis; 7,8-dihydroneopterin triphosphate from GTP: step 1/1. Converts GTP to 7,8-dihydroneopterin triphosphate. In Pelobacter propionicus (strain DSM 2379 / NBRC 103807 / OttBd1), this protein is GTP cyclohydrolase FolE2.